The primary structure comprises 349 residues: tRNA pseudouridine synthase D (349 aa).

Phe-27 provides a ligand contact to substrate. Asp-80 (nucleophile) is an active-site residue. Asn-129 provides a ligand contact to substrate. In terms of domain architecture, TRUD spans 155 to 303 (GVPNYFGAQR…VEAARRAMLL (149 aa)). Substrate is bound at residue Phe-329.

It belongs to the pseudouridine synthase TruD family.

The catalysed reaction is uridine(13) in tRNA = pseudouridine(13) in tRNA. Functionally, responsible for synthesis of pseudouridine from uracil-13 in transfer RNAs. This Citrobacter koseri (strain ATCC BAA-895 / CDC 4225-83 / SGSC4696) protein is tRNA pseudouridine synthase D.